The primary structure comprises 210 residues: Large ribosomal subunit protein uL3 (210 aa).

A disordered region spans residues 131–165; sequence GPMSHGSKYHRRVGSMGATTDPGRTFKGKKMPGRM.

Belongs to the universal ribosomal protein uL3 family. In terms of assembly, part of the 50S ribosomal subunit. Forms a cluster with proteins L14 and L19.

In terms of biological role, one of the primary rRNA binding proteins, it binds directly near the 3'-end of the 23S rRNA, where it nucleates assembly of the 50S subunit. The polypeptide is Large ribosomal subunit protein uL3 (Caldanaerobacter subterraneus subsp. tengcongensis (strain DSM 15242 / JCM 11007 / NBRC 100824 / MB4) (Thermoanaerobacter tengcongensis)).